We begin with the raw amino-acid sequence, 132 residues long: uncharacterized protein (132 aa).

The signal sequence occupies residues 1–19; that stretch reads MKKALFLVGLVFTAGVISS. The N-palmitoyl cysteine moiety is linked to residue Cys20. Cys20 carries the S-diacylglycerol cysteine lipid modification.

It is found in the cell membrane. This is an uncharacterized protein from Aquifex aeolicus (strain VF5).